The following is a 102-amino-acid chain: ATP-dependent Clp protease adapter protein ClpS (102 aa).

It belongs to the ClpS family. In terms of assembly, binds to the N-terminal domain of the chaperone ClpA.

Involved in the modulation of the specificity of the ClpAP-mediated ATP-dependent protein degradation. This chain is ATP-dependent Clp protease adapter protein ClpS, found in Shewanella piezotolerans (strain WP3 / JCM 13877).